The sequence spans 450 residues: Asparagine--tRNA ligase (450 aa).

Belongs to the class-II aminoacyl-tRNA synthetase family. As to quaternary structure, homodimer.

The protein localises to the cytoplasm. It carries out the reaction tRNA(Asn) + L-asparagine + ATP = L-asparaginyl-tRNA(Asn) + AMP + diphosphate + H(+). This Enterococcus faecalis (strain ATCC 700802 / V583) protein is Asparagine--tRNA ligase.